Reading from the N-terminus, the 344-residue chain is Selenide, water dikinase (344 aa).

Residue Cys16 is part of the active site. Residues Lys19 and 47 to 49 (SRD) each bind ATP. Asp50 is a binding site for Mg(2+). ATP contacts are provided by residues Asp67, Asp90, and 138–140 (GHS). Asp90 provides a ligand contact to Mg(2+). Residue Asp226 participates in Mg(2+) binding.

Belongs to the selenophosphate synthase 1 family. Class I subfamily. In terms of assembly, homodimer. Requires Mg(2+) as cofactor.

It carries out the reaction hydrogenselenide + ATP + H2O = selenophosphate + AMP + phosphate + 2 H(+). Its function is as follows. Synthesizes selenophosphate from selenide and ATP. The sequence is that of Selenide, water dikinase from Bordetella bronchiseptica (strain ATCC BAA-588 / NCTC 13252 / RB50) (Alcaligenes bronchisepticus).